A 1056-amino-acid chain; its full sequence is 120.7 kDa protein in NOF-FB transposable element (1056 aa).

The segment at 716-749 (KTIKPTEGNDAEDNDTDDENKEMDLSEQPKEKPR) is disordered. Residues 724 to 736 (NDAEDNDTDDENK) are compositionally biased toward acidic residues. Residues 737 to 749 (EMDLSEQPKEKPR) show a composition bias toward basic and acidic residues.

Its subcellular location is the nucleus. Functionally, may be involved in the transposition of NOF-FB and other FB elements. This Drosophila melanogaster (Fruit fly) protein is 120.7 kDa protein in NOF-FB transposable element (NOF).